Reading from the N-terminus, the 386-residue chain is S-adenosylmethionine synthase (386 aa).

ATP is bound at residue His-16. Mg(2+) is bound at residue Asp-18. A K(+)-binding site is contributed by Glu-44. Residues Glu-57 and Gln-100 each coordinate L-methionine. A flexible loop region spans residues Gln-100–Arg-110. ATP is bound by residues Asp-165–Lys-167, Asp-240, Arg-246–Lys-247, Ala-263, and Lys-267. Asp-240 contributes to the L-methionine binding site. Lys-271 contacts L-methionine.

The protein belongs to the AdoMet synthase family. As to quaternary structure, homotetramer; dimer of dimers. Mg(2+) is required as a cofactor. It depends on K(+) as a cofactor.

The protein resides in the cytoplasm. The enzyme catalyses L-methionine + ATP + H2O = S-adenosyl-L-methionine + phosphate + diphosphate. It functions in the pathway amino-acid biosynthesis; S-adenosyl-L-methionine biosynthesis; S-adenosyl-L-methionine from L-methionine: step 1/1. Its function is as follows. Catalyzes the formation of S-adenosylmethionine (AdoMet) from methionine and ATP. The overall synthetic reaction is composed of two sequential steps, AdoMet formation and the subsequent tripolyphosphate hydrolysis which occurs prior to release of AdoMet from the enzyme. The chain is S-adenosylmethionine synthase from Francisella philomiragia subsp. philomiragia (strain ATCC 25017 / CCUG 19701 / FSC 153 / O#319-036).